A 377-amino-acid polypeptide reads, in one-letter code: Transcription factor SOX-18 (377 aa).

A disordered region spans residues 1–76 (MQRSPPGYGA…GRGERQTADE (76 aa)). Composition is skewed to low complexity over residues 21–34 (AWAPGIGAAAEARG) and 41–52 (SPTSPASPSSLP). Residues 79–147 (IRRPMNAFMV…QHLRDHPNYK (69 aa)) constitute a DNA-binding region (HMG box). 2 interaction with DNA regions span residues 81 to 94 (RPMNAFMVWAKDER) and 105 to 117 (HNAVLSKMLGKAW). The important for transcriptional activation stretch occupies residues 160-225 (RRLEPGLLLP…GLEPGEASFF (66 aa)). A Sox C-terminal domain is found at 256–376 (GAPLAEALRT…SAVYYSACIS (121 aa)). The short motif at 318-326 (TEFDQYLNC) is the 9aaTAD element.

Interacts (via C-terminus) with MEF2C (via MADS box). Detected in adult lung, heart and skeletal muscles.

The protein localises to the nucleus. In terms of biological role, transcriptional activator that binds to the consensus sequence 5'-AACAAAG-3' in the promoter of target genes and plays an essential role in embryonic cardiovascular development and lymphangiogenesis. Activates transcription of PROX1 and other genes coding for lymphatic endothelial markers. Plays an essential role in triggering the differentiation of lymph vessels, but is not required for the maintenance of differentiated lymphatic endothelial cells. Plays an important role in postnatal angiogenesis, where it is functionally redundant with SOX17. Interaction with MEF2C enhances transcriptional activation. Besides, required for normal hair development. This chain is Transcription factor SOX-18 (Sox18), found in Mus musculus (Mouse).